The sequence spans 673 residues: F420-dependent formate dehydrogenase subunit alpha (673 aa).

The 4Fe-4S Mo/W bis-MGD-type domain occupies 3–59 (FKIVNTICPYCGVGCGLGLVVKDGRVIGIHPNKRHPINEGKLCAKGNYCYQFIHSKD). Residues cysteine 10, cysteine 13, cysteine 17, and cysteine 45 each contribute to the [4Fe-4S] cluster site. Position 131 (selenocysteine 131) is a non-standard amino acid, selenocysteine.

This sequence belongs to the prokaryotic molybdopterin-containing oxidoreductase family. As to quaternary structure, dimer of an alpha (FdhA) and a beta (FdhB) subunit. [4Fe-4S] cluster is required as a cofactor. Requires Mo-bis(molybdopterin guanine dinucleotide) as cofactor. The cofactor is Zn(2+).

It catalyses the reaction oxidized coenzyme F420-(gamma-L-Glu)(n) + formate + 2 H(+) = reduced coenzyme F420-(gamma-L-Glu)(n) + CO2. In terms of biological role, catalyzes the oxidation of formate to carbon dioxide, with coenzyme F420 as the electron acceptor. The protein is F420-dependent formate dehydrogenase subunit alpha (fdhA) of Methanocaldococcus jannaschii (strain ATCC 43067 / DSM 2661 / JAL-1 / JCM 10045 / NBRC 100440) (Methanococcus jannaschii).